The sequence spans 138 residues: Basic phospholipase A2 homolog acutohaemolysin (138 aa).

The signal sequence occupies residues methionine 1–glycine 16. 7 cysteine pairs are disulfide-bonded: cysteine 42–cysteine 131, cysteine 44–cysteine 60, cysteine 59–cysteine 111, cysteine 65–cysteine 138, cysteine 66–cysteine 104, cysteine 73–cysteine 97, and cysteine 91–cysteine 102. The segment at lysine 121–lysine 133 is important for membrane-damaging activities in eukaryotes and bacteria; heparin-binding.

In terms of assembly, monomer. As to expression, expressed by the venom gland.

It is found in the secreted. Snake venom phospholipase A2 homolog that lacks enzymatic activity. Is myotoxic. Has a strong indirect hemolytic activity and anticoagulant activity. A model of myotoxic mechanism has been proposed: an apo Lys49-PLA2 is activated by the entrance of a hydrophobic molecule (e.g. fatty acid) at the hydrophobic channel of the protein leading to a reorientation of a monomer. This reorientation causes a transition between 'inactive' to 'active' states, causing alignment of C-terminal and membrane-docking sites (MDoS) side-by-side and putting the membrane-disruption sites (MDiS) in the same plane, exposed to solvent and in a symmetric position for both monomers. The MDoS region stabilizes the toxin on membrane by the interaction of charged residues with phospholipid head groups. Subsequently, the MDiS region destabilizes the membrane with penetration of hydrophobic residues. This insertion causes a disorganization of the membrane, allowing an uncontrolled influx of ions (i.e. calcium and sodium), and eventually triggering irreversible intracellular alterations and cell death. This chain is Basic phospholipase A2 homolog acutohaemolysin, found in Deinagkistrodon acutus (Hundred-pace snake).